Reading from the N-terminus, the 441-residue chain is Ribosomal protein uS12 methylthiotransferase RimO (441 aa).

The region spanning 8–118 is the MTTase N-terminal domain; the sequence is PKIGFVSLGC…VLQHVHHYVP (111 aa). The [4Fe-4S] cluster site is built by C17, C53, C82, C150, C154, and C157. In terms of domain architecture, Radical SAM core spans 136-373; that stretch reads LTPRHYAYLK…MQLQQQISAE (238 aa). Positions 376-441 constitute a TRAM domain; it reads QEKVGREILV…DEYDLWGSRV (66 aa).

The protein belongs to the methylthiotransferase family. RimO subfamily. The cofactor is [4Fe-4S] cluster.

It localises to the cytoplasm. The enzyme catalyses L-aspartate(89)-[ribosomal protein uS12]-hydrogen + (sulfur carrier)-SH + AH2 + 2 S-adenosyl-L-methionine = 3-methylsulfanyl-L-aspartate(89)-[ribosomal protein uS12]-hydrogen + (sulfur carrier)-H + 5'-deoxyadenosine + L-methionine + A + S-adenosyl-L-homocysteine + 2 H(+). Its function is as follows. Catalyzes the methylthiolation of an aspartic acid residue of ribosomal protein uS12. This chain is Ribosomal protein uS12 methylthiotransferase RimO, found in Salmonella paratyphi A (strain ATCC 9150 / SARB42).